Consider the following 353-residue polypeptide: Rhodopsin (353 aa).

Topologically, residues 1–36 (MNGTEGPFFYVPMVNTTGIVRSPYEYPQYYLVNPAA) are extracellular. Asparagine 2 and asparagine 15 each carry an N-linked (GlcNAc...) asparagine glycan. The chain crosses the membrane as a helical span at residues 37 to 61 (YAALGAYMFLLILVGFPINFLTLYV). Topologically, residues 62-73 (TIEHKKLRTPLN) are cytoplasmic. The helical transmembrane segment at 74–96 (YILLNLAVADLFMVLGGFTTTMY) threads the bilayer. Over 97–110 (TSMHGYFVLGRLGC) the chain is Extracellular. The cysteines at positions 110 and 187 are disulfide-linked. Residues 111 to 133 (NIEGFFATLGGEIALWSLVVLAI) form a helical membrane-spanning segment. The 'Ionic lock' involved in activated form stabilization motif lies at 134–136 (ERW). Residues 134–152 (ERWVVVCKPISNFRFGENH) are Cytoplasmic-facing. A helical transmembrane segment spans residues 153-173 (AIMGLAFTWTMAMACAAPPLV). At 174 to 202 (GWSRYIPEGMQCSCGIDYYTRAEGFNNES) the chain is on the extracellular side. N-linked (GlcNAc...) asparagine glycosylation occurs at asparagine 200. The chain crosses the membrane as a helical span at residues 203–224 (FVIYMFICHFTIPLTVVFFCYG). Residues 225–252 (RLLCAVKEAAAAQQESETTQRAEKEVTR) are Cytoplasmic-facing. Residues 253–274 (MVIMMVIAFLVCWLPYASVAWY) traverse the membrane as a helical segment. At 275-286 (IFTHQGSEFGPV) the chain is on the extracellular side. Residues 287 to 308 (FMTIPAFFAKSSSIYNPMIYIC) form a helical membrane-spanning segment. Residue lysine 296 is modified to N6-(retinylidene)lysine. The Cytoplasmic portion of the chain corresponds to 309 to 353 (LNKQFRHCMITTLCCGKNPFEEEEGASTASKTEASSVSSSSVSPA). 2 S-palmitoyl cysteine lipidation sites follow: cysteine 322 and cysteine 323. Positions 331–353 (EEGASTASKTEASSVSSSSVSPA) are disordered. A compositionally biased stretch (low complexity) spans 334–353 (ASTASKTEASSVSSSSVSPA).

The protein belongs to the G-protein coupled receptor 1 family. Opsin subfamily. In terms of processing, phosphorylated on some or all of the serine and threonine residues present in the C-terminal region. Post-translationally, contains one covalently linked retinal chromophore.

It is found in the membrane. It localises to the cell projection. The protein resides in the cilium. The protein localises to the photoreceptor outer segment. Photoreceptor required for image-forming vision at low light intensity. While most salt water fish species use retinal as chromophore, most freshwater fish use 3-dehydroretinal, or a mixture of retinal and 3-dehydroretinal. Light-induced isomerization of 11-cis to all-trans retinal triggers a conformational change that activates signaling via G-proteins. Subsequent receptor phosphorylation mediates displacement of the bound G-protein alpha subunit by arrestin and terminates signaling. The polypeptide is Rhodopsin (rho) (Diplodus annularis (Annular seabream)).